The chain runs to 161 residues: Glycine/sarcosine/betaine reductase complex component A2 (161 aa).

Residue selenocysteine 42 is part of the active site. A non-standard amino acid (selenocysteine) is located at residue selenocysteine 42.

It belongs to the GrdA family. Monomer. Component of the glycine, sarcosine and betaine reductase complexes, together with components B and C.

It carries out the reaction acetyl phosphate + [thioredoxin]-disulfide + NH4(+) + H2O = [thioredoxin]-dithiol + glycine + phosphate + H(+). The catalysed reaction is acetyl phosphate + methylamine + [thioredoxin]-disulfide + H2O = sarcosine + [thioredoxin]-dithiol + phosphate + H(+). It catalyses the reaction acetyl phosphate + trimethylamine + [thioredoxin]-disulfide + H2O = glycine betaine + [thioredoxin]-dithiol + phosphate + H(+). In the first step of glycine, betaine and sarcosine reductases, the substrate is bound to component PB via a Schiff base intermediate. Then the PB-activated substrate is nucleophilically attacked by the selenol anion of component PA to transform it to a carboxymethylated selenoether and the respective amine. By action of component PC, acetyl phosphate is formed, leaving component PA in its oxidized state. Finally component PA becomes reduced by the thioredoxin system to start a new catalytic cycle of reductive deamination. The protein is Glycine/sarcosine/betaine reductase complex component A2 (grdA2) of Photobacterium profundum (strain SS9).